A 367-amino-acid chain; its full sequence is Queuine tRNA-ribosyltransferase (367 aa).

The Proton acceptor role is filled by Asp89. Residues 89-93 (DSGGF), Asp143, Gln187, and Gly214 contribute to the substrate site. Residues 245–251 (GVGTPAD) are RNA binding. The active-site Nucleophile is Asp264. The segment at 269–273 (TRNAR) is RNA binding; important for wobble base 34 recognition. Cys302, Cys304, Cys307, and His333 together coordinate Zn(2+).

The protein belongs to the queuine tRNA-ribosyltransferase family. Homodimer. Within each dimer, one monomer is responsible for RNA recognition and catalysis, while the other monomer binds to the replacement base PreQ1. It depends on Zn(2+) as a cofactor.

It catalyses the reaction 7-aminomethyl-7-carbaguanine + guanosine(34) in tRNA = 7-aminomethyl-7-carbaguanosine(34) in tRNA + guanine. It participates in tRNA modification; tRNA-queuosine biosynthesis. Catalyzes the base-exchange of a guanine (G) residue with the queuine precursor 7-aminomethyl-7-deazaguanine (PreQ1) at position 34 (anticodon wobble position) in tRNAs with GU(N) anticodons (tRNA-Asp, -Asn, -His and -Tyr). Catalysis occurs through a double-displacement mechanism. The nucleophile active site attacks the C1' of nucleotide 34 to detach the guanine base from the RNA, forming a covalent enzyme-RNA intermediate. The proton acceptor active site deprotonates the incoming PreQ1, allowing a nucleophilic attack on the C1' of the ribose to form the product. After dissociation, two additional enzymatic reactions on the tRNA convert PreQ1 to queuine (Q), resulting in the hypermodified nucleoside queuosine (7-(((4,5-cis-dihydroxy-2-cyclopenten-1-yl)amino)methyl)-7-deazaguanosine). The sequence is that of Queuine tRNA-ribosyltransferase from Nitrosospira multiformis (strain ATCC 25196 / NCIMB 11849 / C 71).